The following is a 652-amino-acid chain: Acetyl-coenzyme A synthetase (652 aa).

CoA-binding positions include 191 to 194 and Thr311; that span reads RAGN. Residues 387-389, 411-416, Asp503, and Arg518 contribute to the ATP site; these read GEP and DTWWQT. Ser526 serves as a coordination point for CoA. An ATP-binding site is contributed by Arg529. Mg(2+) is bound by residues Val540, His542, and Val545. Arg587 lines the CoA pocket. An N6-acetyllysine modification is found at Lys613.

Belongs to the ATP-dependent AMP-binding enzyme family. Mg(2+) is required as a cofactor. In terms of processing, acetylated. Deacetylation by the SIR2-homolog deacetylase activates the enzyme.

It carries out the reaction acetate + ATP + CoA = acetyl-CoA + AMP + diphosphate. Its function is as follows. Catalyzes the conversion of acetate into acetyl-CoA (AcCoA), an essential intermediate at the junction of anabolic and catabolic pathways. AcsA undergoes a two-step reaction. In the first half reaction, AcsA combines acetate with ATP to form acetyl-adenylate (AcAMP) intermediate. In the second half reaction, it can then transfer the acetyl group from AcAMP to the sulfhydryl group of CoA, forming the product AcCoA. This Marinomonas sp. (strain MWYL1) protein is Acetyl-coenzyme A synthetase.